Reading from the N-terminus, the 235-residue chain is Orotidine 5'-phosphate decarboxylase (235 aa).

Substrate contacts are provided by residues D10, K33, 60–69, T123, R185, Q194, G214, and R215; that span reads DLKMHDIPNT. K62 (proton donor) is an active-site residue.

This sequence belongs to the OMP decarboxylase family. Type 1 subfamily. In terms of assembly, homodimer.

It catalyses the reaction orotidine 5'-phosphate + H(+) = UMP + CO2. It participates in pyrimidine metabolism; UMP biosynthesis via de novo pathway; UMP from orotate: step 2/2. Catalyzes the decarboxylation of orotidine 5'-monophosphate (OMP) to uridine 5'-monophosphate (UMP). The sequence is that of Orotidine 5'-phosphate decarboxylase from Lactobacillus acidophilus (strain ATCC 700396 / NCK56 / N2 / NCFM).